A 183-amino-acid chain; its full sequence is Dual-action ribosomal maturation protein DarP (183 aa).

Residues 1 to 23 are disordered; it reads MTKQPDDWLDEVPDNENDDDDDE. Acidic residues predominate over residues 7-23; it reads DWLDEVPDNENDDDDDE.

This sequence belongs to the DarP family.

It localises to the cytoplasm. In terms of biological role, member of a network of 50S ribosomal subunit biogenesis factors which assembles along the 30S-50S interface, preventing incorrect 23S rRNA structures from forming. Promotes peptidyl transferase center (PTC) maturation. The sequence is that of Dual-action ribosomal maturation protein DarP from Cronobacter sakazakii (strain ATCC BAA-894) (Enterobacter sakazakii).